The primary structure comprises 129 residues: NADH-quinone oxidoreductase subunit A (129 aa).

A run of 3 helical transmembrane segments spans residues 14–34 (LAIH…VAAW), 67–87 (FLIA…FAWA), and 95–115 (WLGL…LVYL).

The protein belongs to the complex I subunit 3 family. NDH-1 is composed of 14 different subunits. Subunits NuoA, H, J, K, L, M, N constitute the membrane sector of the complex.

The protein resides in the cell inner membrane. It carries out the reaction a quinone + NADH + 5 H(+)(in) = a quinol + NAD(+) + 4 H(+)(out). In terms of biological role, NDH-1 shuttles electrons from NADH, via FMN and iron-sulfur (Fe-S) centers, to quinones in the respiratory chain. The immediate electron acceptor for the enzyme in this species is believed to be ubiquinone. Couples the redox reaction to proton translocation (for every two electrons transferred, four hydrogen ions are translocated across the cytoplasmic membrane), and thus conserves the redox energy in a proton gradient. This Rhodopseudomonas palustris (strain BisB5) protein is NADH-quinone oxidoreductase subunit A.